Reading from the N-terminus, the 531-residue chain is SWI/SNF-related matrix-associated actin-dependent regulator of chromatin subfamily D member 2 (531 aa).

The disordered stretch occupies residues 20–85 (AVAAALGAPP…MSPGSRMPMA (66 aa)). Residues 34–45 (PGMLPSPALRGP) show a composition bias toward low complexity. Asymmetric dimethylarginine is present on residues R81 and R104. At S203 the chain carries Phosphoserine. Residues 205-226 (SKADGDNAGTAGTPGGTPAADK) form a disordered region. Residues 210 to 225 (DNAGTAGTPGGTPAAD) show a composition bias toward low complexity. T217 is subject to Phosphothreonine. K226 is covalently cross-linked (Glycyl lysine isopeptide (Lys-Gly) (interchain with G-Cter in SUMO2)). An SWIB/MDM2 domain is found at 306–383 (HQPPQYKLDP…PMKLAGLLQH (78 aa)).

This sequence belongs to the SMARCD family. In terms of assembly, component of the multiprotein chromatin-remodeling complexes SWI/SNF: SWI/SNF-A (BAF), SWI/SNF-B (PBAF) and related complexes. The canonical complex contains a catalytic subunit (either SMARCA4/BRG1/BAF190A or SMARCA2/BRM/BAF190B), and at least SMARCE1, ACTL6A/BAF53, SMARCC1/BAF155, SMARCC2/BAF170, and SMARCB1/SNF5/BAF47. Other subunits specific to each of the complexes may also be present permitting several possible combinations developmentally and tissue specific. Component of the BAF complex, which includes at least actin (ACTB), ARID1A/BAF250A, ARID1B/BAF250B, SMARCA2/BRM, SMARCA4/BRG1, ACTL6A/BAF53, ACTL6B/BAF53B, SMARCE1/BAF57, SMARCC1/BAF155, SMARCC2/BAF170, SMARCB1/SNF5/INI1, and one or more SMARCD1/BAF60A, SMARCD2/BAF60B, or SMARCD3/BAF60C. In muscle cells, the BAF complex also contains DPF3. Component of the SWI/SNF-B (PBAF) chromatin remodeling complex, at least composed of SMARCA4/BRG1, SMARCB1/BAF47/SNF5, ACTL6A/BAF53A or ACTL6B/BAF53B, SMARCE1/BAF57, SMARCD1/BAF60A, SMARCD2/BAF60B, perhaps SMARCD3/BAF60C, SMARCC1/BAF155, SMARCC2/BAF170, PBRM1/BAF180, ARID2/BAF200 and actin (ACTB). Interacts with UNKL. Interacts with CEBPE. Ubiquitinated through a signaling process involving RAC1 and the RING finger protein UNKL.

The protein resides in the nucleus. Involved in transcriptional activation and repression of select genes by chromatin remodeling (alteration of DNA-nucleosome topology). Component of SWI/SNF chromatin remodeling complexes that carry out key enzymatic activities, changing chromatin structure by altering DNA-histone contacts within a nucleosome in an ATP-dependent manner. Critical regulator of myeloid differentiation, controlling granulocytopoiesis and the expression of genes involved in neutrophil granule formation. The polypeptide is SWI/SNF-related matrix-associated actin-dependent regulator of chromatin subfamily D member 2 (Smarcd2) (Mus musculus (Mouse)).